Consider the following 188-residue polypeptide: Elongation factor P (188 aa).

An N6-(3,6-diaminohexanoyl)-5-hydroxylysine modification is found at Lys-34.

It belongs to the elongation factor P family. Post-translationally, may be beta-lysylated on the epsilon-amino group of Lys-34 by the combined action of EpmA and EpmB, and then hydroxylated on the C5 position of the same residue by EpmC (if this protein is present). Lysylation is critical for the stimulatory effect of EF-P on peptide-bond formation. The lysylation moiety may extend toward the peptidyltransferase center and stabilize the terminal 3-CCA end of the tRNA. Hydroxylation of the C5 position on Lys-34 may allow additional potential stabilizing hydrogen-bond interactions with the P-tRNA.

The protein localises to the cytoplasm. The protein operates within protein biosynthesis; polypeptide chain elongation. In terms of biological role, involved in peptide bond synthesis. Alleviates ribosome stalling that occurs when 3 or more consecutive Pro residues or the sequence PPG is present in a protein, possibly by augmenting the peptidyl transferase activity of the ribosome. Modification of Lys-34 is required for alleviation. The polypeptide is Elongation factor P (Photobacterium profundum (strain SS9)).